Consider the following 2234-residue polypeptide: Bridge-like lipid transfer protein family member 2 (2234 aa).

The first 31 residues, 1 to 31, serve as a signal peptide directing secretion; that stretch reads MPLFLSALLVLLLVALSALFLGRWLVVRLAT. A transmembrane domain region spans residues 29–108; that stretch reads LATRWCQRKL…LQKVSSLSAP (80 aa). Ser-563 bears the Phosphoserine mark. The disordered stretch occupies residues 1496 to 1529; the sequence is QMSAKKPKRGIPPSAQVPPHVSTPSFSGRPDKGS. Positions 1814–1885 form a coiled coil; that stretch reads ILHLQEAVRQ…LNILIRCFKD (72 aa). Phosphoserine is present on residues Ser-1846 and Ser-2090.

Belongs to the SABRE family.

It is found in the cell membrane. It localises to the endoplasmic reticulum membrane. The protein resides in the mitochondrion membrane. In terms of biological role, tube-forming lipid transport protein which binds to phosphatidylinositols and affects phosphatidylinositol-4,5-bisphosphate (PtdIns-4,5-P2) distribution. In Mus musculus (Mouse), this protein is Bridge-like lipid transfer protein family member 2 (Bltp2).